We begin with the raw amino-acid sequence, 473 residues long: Allene oxide synthase CYP74A2 (473 aa).

Residues Lys88, His119, and Lys123 each contribute to the heme b site. Positions 199 and 282 each coordinate (13S)-hydroperoxy-(9Z,11E)-octadecadienoate. Heme b is bound by residues Lys424 and Cys426.

This sequence belongs to the cytochrome P450 family. It depends on heme b as a cofactor.

It carries out the reaction (13S)-hydroperoxy-(9Z,11E,15Z)-octadecatrienoate = (9Z,13S,15Z)-12,13-epoxyoctadeca-9,11,15-trienoate + H2O. It catalyses the reaction (13S)-hydroperoxy-(9Z,11E)-octadecadienoate = (9Z,13S)-12,13-epoxyoctadeca-9,11-dienoate + H2O. Its pathway is lipid metabolism; oxylipin biosynthesis. Cytochrome P450 enzyme involved in the biosynthesis of oxylipin jasmonates, important phytohormones acting as growth regulators and signaling molecules for plant defense. Functions as an allene oxide synthase that converts hydroperoxy fatty acids to unstable allene epoxides. Catalyzes the dehydration of 13-HPOTE ((13S)-hydroperoxy-(9Z,11E,15Z)-octadecatrienoate). Also catalyzes the dehydration of 13-HPODE ((13S)-hydroperoxy-(9Z,11E)-octadecadienoate). This Parthenium argentatum (Guayule rubber plant) protein is Allene oxide synthase CYP74A2.